A 197-amino-acid polypeptide reads, in one-letter code: Xanthine phosphoribosyltransferase (197 aa).

Positions 20 and 27 each coordinate xanthine. 128-132 (ANGQA) is a 5-phospho-alpha-D-ribose 1-diphosphate binding site. Lysine 156 contributes to the xanthine binding site.

The protein belongs to the purine/pyrimidine phosphoribosyltransferase family. Xpt subfamily. As to quaternary structure, homodimer.

Its subcellular location is the cytoplasm. The enzyme catalyses XMP + diphosphate = xanthine + 5-phospho-alpha-D-ribose 1-diphosphate. It functions in the pathway purine metabolism; XMP biosynthesis via salvage pathway; XMP from xanthine: step 1/1. Functionally, converts the preformed base xanthine, a product of nucleic acid breakdown, to xanthosine 5'-monophosphate (XMP), so it can be reused for RNA or DNA synthesis. In Bacillus cytotoxicus (strain DSM 22905 / CIP 110041 / 391-98 / NVH 391-98), this protein is Xanthine phosphoribosyltransferase.